A 514-amino-acid chain; its full sequence is Cytochrome P450 monooxygenase FUS8 (514 aa).

The chain crosses the membrane as a helical span at residues L28 to F48. N-linked (GlcNAc...) asparagine glycans are attached at residues N225 and N443. Residue C460 coordinates heme.

It belongs to the cytochrome P450 family. The cofactor is heme.

The protein localises to the membrane. It functions in the pathway mycotoxin biosynthesis. Cytochrome P450 monooxygenase; part of the gene cluster that mediates the biosynthesis of the mycotoxin fusarin C. Within the cluster, FUS1, FUS2, FUS8 and FUS9 are sufficient for fusarin production. The roles of the other FUS members are yet undetermined. The fusarin C synthetase FUS1 is responsible for the condensation of one acetyl-coenzyme A (CoA) unit with six malonyl-CoA units and the amide linkage of the arising heptaketide and homoserine, subsequently releasing the first intermediate, prefusarin, as an alcohol with an open ring structure. The cytochrome P450 monooxygenase FUS8 participates in multiple oxidation processes at carbon C-20 and is able to use the FUS1 product as substrate, resulting in formation of 20-hydroxy-prefusarin. This reaction seems to be essential before the 2-pyrrolidone ring closure can be catalyzed by FUS2, generating 20-hydroxy-fusarin. FUS8 is able to further oxidizes carbon C-20 after ring closure, resulting in the formation of carboxy-fusarin C. As the last step, FUS9 methylates the hydroxyl group at C-21 to generate fusarin C. Fusarin C can then rearrange to epi-fusarin C, the (z)-isomers, and fusarin A and fusarin D. The polypeptide is Cytochrome P450 monooxygenase FUS8 (Gibberella moniliformis (strain M3125 / FGSC 7600) (Maize ear and stalk rot fungus)).